The chain runs to 125 residues: Photosystem II extrinsic protein U (125 aa).

The signal sequence occupies residues 1 to 29 (MKRLLSWLTGLVVMAGLLFSLATPSGVQA).

This sequence belongs to the PsbU family. As to quaternary structure, PSII is composed of 1 copy each of membrane proteins PsbA, PsbB, PsbC, PsbD, PsbE, PsbF, PsbH, PsbI, PsbJ, PsbK, PsbL, PsbM, PsbT, PsbX, PsbY, PsbZ, Psb30/Ycf12, peripheral proteins PsbO, CyanoQ (PsbQ), PsbU, PsbV and a large number of cofactors. It forms dimeric complexes.

It is found in the cellular thylakoid membrane. Functionally, one of the extrinsic, lumenal subunits of photosystem II (PSII). PSII is a light-driven water plastoquinone oxidoreductase, using light energy to abstract electrons from H(2)O, generating a proton gradient subsequently used for ATP formation. The extrinsic proteins stabilize the structure of photosystem II oxygen-evolving complex (OEC), the ion environment of oxygen evolution and protect the OEC against heat-induced inactivation. The protein is Photosystem II extrinsic protein U of Synechococcus sp. (strain WH7803).